The sequence spans 178 residues: Hypoxanthine phosphoribosyltransferase (178 aa).

The diphosphate site is built by Arg43 and Gly44. Glu99 contributes to the GMP binding site. Glu99 provides a ligand contact to IMP. Residues Glu99 and Asp100 each contribute to the Mg(2+) site. Asp103 functions as the Proton acceptor in the catalytic mechanism. Residues 103–108 (DSGNTL), Lys131, and Asp159 contribute to the GMP site. IMP-binding positions include 103-108 (DSGNTL) and Lys131. Arg165 lines the diphosphate pocket.

Belongs to the purine/pyrimidine phosphoribosyltransferase family. In terms of assembly, homotetramer. Requires Mg(2+) as cofactor.

Its subcellular location is the cytoplasm. It catalyses the reaction IMP + diphosphate = hypoxanthine + 5-phospho-alpha-D-ribose 1-diphosphate. The catalysed reaction is GMP + diphosphate = guanine + 5-phospho-alpha-D-ribose 1-diphosphate. The protein operates within purine metabolism; IMP biosynthesis via salvage pathway; IMP from hypoxanthine: step 1/1. Its function is as follows. Purine salvage pathway enzyme which catalyzes the transfer of the ribosyl-5-phosphate group from 5-phospho-alpha-D-ribose 1-diphosphate (PRPP) to the N9 position of hypoxanthine to yield IMP (inosine 5'-monophosphate). To a lesser extent, can also act on guanine leading to GMP, but shows a highly less efficient activity with xanthine. This is Hypoxanthine phosphoribosyltransferase (hpt) from Salmonella typhimurium (strain LT2 / SGSC1412 / ATCC 700720).